The primary structure comprises 151 residues: Myosin light polypeptide 6 (151 aa).

C2 carries the post-translational modification N-acetylcysteine. One can recognise an EF-hand 1 domain in the interval 7-42; sequence DQTAEFKEAFQLFDRTGDGKILYSQCGDVMRALGQN. S57 carries the phosphoserine modification. K81 carries the N6-acetyllysine modification. One can recognise an EF-hand 2 domain in the interval 84–119; sequence GTYEDYVEGLRVFDKEGNGTVMGAEIRHVLVTLGEK.

Myosin is a hexamer of 2 heavy chains and 4 light chains. Interacts with SPATA6.

Regulatory light chain of myosin. Does not bind calcium. The polypeptide is Myosin light polypeptide 6 (MYL6) (Bos taurus (Bovine)).